The chain runs to 745 residues: A-kinase anchor protein 5 (745 aa).

The tract at residues 1–121 (METSVSEIQV…KKKAKSRLKF (121 aa)) is disordered. Residues 1-164 (METSVSEIQV…EIKAQTQPDD (164 aa)) form an essential to the intracellular anchoring function region. S4 and S22 each carry phosphoserine. A lipid anchor (S-palmitoyl cysteine) is attached at C36. Over residues 37-50 (FKRRKKANKTKPKA) the composition is skewed to basic residues. 2 stretches are compositionally biased toward basic and acidic residues: residues 54 to 63 (TAEETKKHTP) and 90 to 100 (SEPAKKQKPPE). An AKAP CaM-binding motif is present at residues 74–94 (AGAWASIKGLVTHRKRSEPAK). C123 is lipidated: S-palmitoyl cysteine. A compositionally biased stretch (polar residues) spans 162–175 (PDDQAIQAGSTQGL). 2 disordered regions span residues 162–195 (PDDQAIQAGSTQGLQEGVLVRDGKKSQESHISNS) and 215–392 (AIQM…DHTE). 2 stretches are compositionally biased toward basic and acidic residues: residues 180–189 (LVRDGKKSQE) and 222–231 (ELEKETKVIT). The span at 234–268 (PSVQTQRASLLESSAAGSPRSVTSAAPPSPATTHQ) shows a compositional bias: polar residues. The segment covering 285–300 (GKDDRRKTAAEEKKSG) has biased composition (basic and acidic residues). The 1; approximate repeat unit spans residues 304-312 (LGQAEEAAV). Positions 304 to 628 (LGQAEEAAVG…PTVDQAEEAI (325 aa)) are 28 X 8 AA repeats of V-G-Q-A-E-E-A-T. One copy of the 2; approximate repeat lies at 320-327 (LSQAGEAT). Residues 328–335 (AGHPEEAT) form a 3; approximate repeat. The stretch at 348–355 (LSQAEETT) is one 4; approximate repeat. Residues 356–363 (VAQAKETV) form a 5; approximate repeat. The stretch at 364-395 (LSQAKEGELSQAKKATVGQAEEATIDHTEKVT) is one 6; approximate repeat. A 7; approximate repeat occupies 420–436 (LSQAKEATVVGQAEEAT). Residues 445-452 (VGQAEEAT) form an 8; approximate repeat. A run of 5 repeats spans residues 461-468 (VDQAEEAT), 469-476 (VGQAEEAT), 477-484 (VGQAEEAT), 485-492 (VDWAEKPT), and 493-500 (VGQAEEAT). A disordered region spans residues 466-560 (EATVGQAEEA…QAEEATVGQA (95 aa)). A 14; approximate repeat occupies 501-508 (VGQAEEAT). The stretch at 517 to 524 (VDQAEEAT) is one 15; approximate repeat. 4 repeat units span residues 525-532 (VGQAEEAT), 533-540 (VGHTEKVT), 541-548 (VDHAEEAT), and 549-556 (VGQAEEAT). Over residues 535–546 (HTEKVTVDHAEE) the composition is skewed to basic and acidic residues. The stretch at 557–564 (VGQAEKVT) is one 20; approximate repeat. Residues 565–572 (VDHAEEAT) form repeat 21. A 22; approximate repeat occupies 573–580 (VGQAEEAT). One copy of the 23; approximate repeat lies at 581 to 588 (VGQAEKVT). A 24; approximate repeat occupies 589–596 (VDHAEEAT). Residues 597 to 604 (VGQAEEAT) form repeat 25. The 26; approximate repeat unit spans residues 605–612 (VGQAEKVT). The stretch at 613–620 (VDQAEEPT) is one 27; approximate repeat. The segment at 617–651 (EEPTVDQAEEAISSHAPDLKENGIDTEKPRSEESK) is disordered. The 28; approximate repeat unit spans residues 621-628 (VDQAEEAI). Positions 633-651 (PDLKENGIDTEKPRSEESK) are enriched in basic and acidic residues. The segment at 706 to 727 (YETLLIETASSLVKNAIELSVE) is RII-beta subunit binding domain. The tethers NFATC2 to CRAC channels stretch occupies residues 728–745 (QLVNEMVSEDNQINTLFQ).

As to quaternary structure, binding protein for dimer of the RII-beta regulatory subunit of cAMP-dependent protein kinase (PKA) and also for the protein kinase C (PKC) and the phosphatase calcineurin (PP2B). Each enzyme is inhibited when bound to the anchoring protein. Also binds the beta2-adrenergic receptor. Part of a complex containing AKAP5, ADCY5, ADCY6 and PDE4C. Interacts with ADCY8, and enhances its phosphorylation at lipid rafts. Interacts with ORAI1 (isoform alpha) (via N-terminus) upon store depletion and in response to LTC4. Does not interact with ORAI2 and ORAI3 paralogs. Interacts (via leucine zipper domain) with NFATC2/NFAT1. Interacts with calmodulin; the interaction is calcium-independent. Interacts with KCNQ2; the interaction may help KCNQ2 channel complex to retain calcium-bound calmodulin. Interacts with KCNK2; the channel is recruited to postsynaptic microdomains by AKAP5 where it can integrate neurotransmitter receptor signals. Part of a complex composed of AKAP5 and ADRB2. Palmitoylated. Palmitoylation at Cys-36 and Cys-123 play a key role in the targeting of AKAP5 to lipid rafts. Palmitoylation by ZDHHC2 is required for AKAP5 function in LTP-stimulated recycling endosome exocytosis.

The protein localises to the postsynaptic recycling endosome membrane. Its subcellular location is the cell projection. The protein resides in the dendrite. It is found in the postsynaptic cell membrane. In terms of biological role, multivalent scaffold protein that anchors the cAMP-dependent protein kinase/PKA to cytoskeletal and/or organelle-associated proteins, targeting the signal carried by cAMP to specific intracellular effectors. Association with the beta2-adrenergic receptor (beta2-AR) not only regulates beta2-AR signaling pathway, but also the activation by PKA by switching off the beta2-AR signaling cascade. Plays a role in long term synaptic potentiation by regulating protein trafficking from the dendritic recycling endosomes to the plasma membrane and controlling both structural and functional plasticity at excitatory synapses. In hippocampal pyramidal neurons, recruits KCNK2/TREK-1 channel at postsynaptic dense bodies microdomains and converts it to a leak channel no longer sensitive to stimulation by arachidonic acid, acidic pH or mechanical stress, nor inhibited by Gq-coupled receptors but still under the negative control of Gs-coupled receptors. Associates with ORAI1 pore-forming subunit of CRAC channels in Ca(2+) signaling microdomains where it recruits NFATC2/NFAT1 and couples store-operated Ca(2+) influx to calmodulin and calcineurin signaling and activation of NFAT-dependent transcriptional responses. The sequence is that of A-kinase anchor protein 5 (Akap5) from Mus musculus (Mouse).